Reading from the N-terminus, the 671-residue chain is DNA ligase (671 aa).

Residues 34–38 (DAEYD), 83–84 (SL), and glutamate 115 each bind NAD(+). Lysine 117 acts as the N6-AMP-lysine intermediate in catalysis. Arginine 138, glutamate 174, lysine 291, and lysine 315 together coordinate NAD(+). Cysteine 409, cysteine 412, cysteine 427, and cysteine 432 together coordinate Zn(2+). The BRCT domain occupies 589–671 (RSGGPLTGKS…LQMIDTLEEA (83 aa)).

It belongs to the NAD-dependent DNA ligase family. LigA subfamily. The cofactor is Mg(2+). Mn(2+) serves as cofactor.

It carries out the reaction NAD(+) + (deoxyribonucleotide)n-3'-hydroxyl + 5'-phospho-(deoxyribonucleotide)m = (deoxyribonucleotide)n+m + AMP + beta-nicotinamide D-nucleotide.. Its function is as follows. DNA ligase that catalyzes the formation of phosphodiester linkages between 5'-phosphoryl and 3'-hydroxyl groups in double-stranded DNA using NAD as a coenzyme and as the energy source for the reaction. It is essential for DNA replication and repair of damaged DNA. This Syntrophotalea carbinolica (strain DSM 2380 / NBRC 103641 / GraBd1) (Pelobacter carbinolicus) protein is DNA ligase.